The following is a 254-amino-acid chain: MIPPADSLLKHDNPVLISKNTERKSPKSRPLKVSSPQTVLTAPVPPPPKPKTPLLDATKPAEEILNAILPPREWVENNQLWIQQVSSTPSTRMDVVHLQEELDMKLQQRQARETGICPVRRELYSQCFDELIRQVTINCAERGLLLLRVRDEIHMTISAYQTLYESSVAFGMRKALQAEQGKSDMEKRMADLEMEKKDLERQVNEQKAKCEAIEKREAERRQVEEKKHAEEIQFLKRTNQQLKAQLEGIIAPKK.

The segment at 1–55 is disordered; that stretch reads MIPPADSLLKHDNPVLISKNTERKSPKSRPLKVSSPQTVLTAPVPPPPKPKTPLL. The stretch at 175–245 forms a coiled coil; it reads ALQAEQGKSD…KRTNQQLKAQ (71 aa).

It belongs to the inner dynein arm light chain family.

The protein resides in the cell projection. It localises to the cilium. The protein localises to the flagellum. Its subcellular location is the dynein axonemal particle. It is found in the cytoplasm. Involved in sperm flagellum assembly. The chain is Axonemal dynein light intermediate polypeptide 1 from Xenopus laevis (African clawed frog).